Here is a 436-residue protein sequence, read N- to C-terminus: Probable cinnamyl alcohol dehydrogenase 8B (436 aa).

Residue cysteine 120 coordinates Zn(2+). NADP(+) is bound at residue threonine 122. Histidine 142, glutamate 143, cysteine 173, cysteine 176, cysteine 179, cysteine 187, and cysteine 236 together coordinate Zn(2+). Residues threonine 240, 261 to 266 (GLGGLG), 284 to 289 (STSPGK), threonine 324, glycine 348, and 371 to 373 (NCV) each bind NADP(+).

Belongs to the zinc-containing alcohol dehydrogenase family. As to quaternary structure, homodimer. Requires Zn(2+) as cofactor.

It catalyses the reaction (E)-cinnamyl alcohol + NADP(+) = (E)-cinnamaldehyde + NADPH + H(+). The enzyme catalyses (E)-coniferol + NADP(+) = (E)-coniferaldehyde + NADPH + H(+). The catalysed reaction is (E)-sinapyl alcohol + NADP(+) = (E)-sinapaldehyde + NADPH + H(+). It carries out the reaction (E)-4-coumaroyl alcohol + NADP(+) = (E)-4-coumaraldehyde + NADPH + H(+). It catalyses the reaction (E)-caffeyl alcohol + NADP(+) = (E)-caffeyl aldehyde + NADPH + H(+). The protein operates within aromatic compound metabolism; phenylpropanoid biosynthesis. Involved in lignin biosynthesis. Catalyzes the final step specific for the production of lignin monomers. Catalyzes the NADPH-dependent reduction of coniferaldehyde, 5-hydroxyconiferaldehyde, sinapaldehyde, 4-coumaraldehyde and caffeyl aldehyde to their respective alcohols. This chain is Probable cinnamyl alcohol dehydrogenase 8B, found in Oryza sativa subsp. japonica (Rice).